Here is a 199-residue protein sequence, read N- to C-terminus: Protein GrpE (199 aa).

The tract at residues 1-40 (MEKKKHGTNSISEALKVKAAVEQETATPEPTPQSETESAD) is disordered. Polar residues predominate over residues 24–36 (ETATPEPTPQSET).

Belongs to the GrpE family. As to quaternary structure, homodimer.

The protein localises to the cytoplasm. Functionally, participates actively in the response to hyperosmotic and heat shock by preventing the aggregation of stress-denatured proteins, in association with DnaK and GrpE. It is the nucleotide exchange factor for DnaK and may function as a thermosensor. Unfolded proteins bind initially to DnaJ; upon interaction with the DnaJ-bound protein, DnaK hydrolyzes its bound ATP, resulting in the formation of a stable complex. GrpE releases ADP from DnaK; ATP binding to DnaK triggers the release of the substrate protein, thus completing the reaction cycle. Several rounds of ATP-dependent interactions between DnaJ, DnaK and GrpE are required for fully efficient folding. The chain is Protein GrpE from Geotalea uraniireducens (strain Rf4) (Geobacter uraniireducens).